A 302-amino-acid polypeptide reads, in one-letter code: Nucleotide-binding protein Bamb_2855 (302 aa).

Residue 8–15 (GISGSGKS) coordinates ATP. 57–60 (DARS) is a binding site for GTP.

Belongs to the RapZ-like family.

In terms of biological role, displays ATPase and GTPase activities. This Burkholderia ambifaria (strain ATCC BAA-244 / DSM 16087 / CCUG 44356 / LMG 19182 / AMMD) (Burkholderia cepacia (strain AMMD)) protein is Nucleotide-binding protein Bamb_2855.